We begin with the raw amino-acid sequence, 138 residues long: Cysteine desulfuration protein SufE (138 aa).

The active-site Cysteine persulfide intermediate is the Cys-51.

It belongs to the SufE family. Homodimer. Interacts with SufS.

It is found in the cytoplasm. It functions in the pathway cofactor biosynthesis; iron-sulfur cluster biosynthesis. Functionally, participates in cysteine desulfuration mediated by SufS. Cysteine desulfuration mobilizes sulfur from L-cysteine to yield L-alanine and constitutes an essential step in sulfur metabolism for biosynthesis of a variety of sulfur-containing biomolecules. Functions as a sulfur acceptor for SufS, by mediating the direct transfer of the sulfur atom from the S-sulfanylcysteine of SufS, an intermediate product of cysteine desulfuration process. The sequence is that of Cysteine desulfuration protein SufE from Escherichia coli O8 (strain IAI1).